Consider the following 322-residue polypeptide: UV DNA damage endonuclease (322 aa).

Belongs to the uve1/UvsE family.

Component in a DNA repair pathway. Removal of UV LIGHT damaged nucleotides. Recognizes pyrimidine dimers and cleave a phosphodiester bond immediately 5' to the lesion. The polypeptide is UV DNA damage endonuclease (Nostoc sp. (strain PCC 7120 / SAG 25.82 / UTEX 2576)).